We begin with the raw amino-acid sequence, 860 residues long: Leucine--tRNA ligase (860 aa).

The 'HIGH' region motif lies at 42–52 (PYPSGRLHMGH). A 'KMSKS' region motif is present at residues 619-623 (KMSKS). Position 622 (lysine 622) interacts with ATP.

This sequence belongs to the class-I aminoacyl-tRNA synthetase family.

The protein resides in the cytoplasm. The catalysed reaction is tRNA(Leu) + L-leucine + ATP = L-leucyl-tRNA(Leu) + AMP + diphosphate. This chain is Leucine--tRNA ligase, found in Pectobacterium atrosepticum (strain SCRI 1043 / ATCC BAA-672) (Erwinia carotovora subsp. atroseptica).